Consider the following 1148-residue polypeptide: Alpha-mannosidase 2 (1148 aa).

The Cytoplasmic portion of the chain corresponds to 1 to 5 (MKLSR). Residues 6–26 (QFTVFGSAIFCVVIFSLYLML) traverse the membrane as a helical; Signal-anchor for type II membrane protein segment. Residues 27–1148 (DRGHLDYPRG…EISTSRIRLR (1122 aa)) are Lumenal-facing. Residues Ser80 and Ser82 each carry the phosphoserine modification. The N-linked (GlcNAc...) asparagine glycan is linked to Asn93. Zn(2+) contacts are provided by His174, Asp176, Asp288, and His568. The active-site Nucleophile is the Asp288. The segment at 1121–1148 (MHSPPDAQNTSEVSLSPMEISTSRIRLR) is disordered.

This sequence belongs to the glycosyl hydrolase 38 family. Homodimer; disulfide-linked. Zn(2+) serves as cofactor. Glycosylated. In terms of tissue distribution, liver.

It is found in the golgi apparatus membrane. The catalysed reaction is N(4)-{beta-D-GlcNAc-(1-&gt;2)-alpha-D-Man-(1-&gt;3)-[alpha-D-Man-(1-&gt;3)-[alpha-D-Man-(1-&gt;6)]-alpha-D-Man-(1-&gt;6)]-beta-D-Man-(1-&gt;4)-beta-D-GlcNAc-(1-&gt;4)-beta-D-GlcNAc}-L-asparaginyl-[protein] + 2 H2O = 2 alpha-D-mannopyranose + an N(4)-{beta-D-GlcNAc-(1-&gt;2)-alpha-D-Man-(1-&gt;3)-[alpha-D-Man-(1-&gt;6)]-beta-D-Man-(1-&gt;4)-beta-D-GlcNAc-(1-&gt;4)-beta-D-GlcNAc}-L-asparaginyl-[protein]. It participates in protein modification; protein glycosylation. Its activity is regulated as follows. Inhibited by swainsonine. In terms of biological role, catalyzes the first committed step in the biosynthesis of complex N-glycans. It controls conversion of high mannose to complex N-glycans; the final hydrolytic step in the N-glycan maturation pathway. This is Alpha-mannosidase 2 (Man2a1) from Rattus norvegicus (Rat).